Consider the following 833-residue polypeptide: Protein PAT1 homolog 1 (833 aa).

Disordered stretches follow at residues D279–M313, N398–P427, and E492–L549. Positions P303 to M313 are enriched in low complexity. Polar residues predominate over residues N398–H408.

The protein belongs to the PAT1 family.

It is found in the cytoplasm. Its subcellular location is the P-body. In terms of biological role, RNA-binding protein involved in deadenylation-dependent decapping of mRNAs, leading to the degradation of mRNAs. Acts as a scaffold protein that connects deadenylation and decapping machinery. Required for the recruitment of P-body components such as cgh-1 in somatic blastomeres. May play a role in recruiting the decapping enzyme dcap-1 to cytoplasmic puncta in the cell body of the posterior touch receptor neuron, PLM. This chain is Protein PAT1 homolog 1, found in Caenorhabditis elegans.